The sequence spans 443 residues: Acyl transferase 10 (443 aa).

Catalysis depends on proton acceptor residues His-182 and Asp-386.

The protein belongs to the plant acyltransferase family.

Functionally, involved in the incorporation of ferulate into the cell wall. May act as arabinoxylan feruloyl transferase. May function as p-coumaroyl-CoA transferase involved in glucuronoarabinoxylan modification. The polypeptide is Acyl transferase 10 (Oryza sativa subsp. japonica (Rice)).